Reading from the N-terminus, the 56-residue chain is Large ribosomal subunit protein bL32 (56 aa).

Positions 1 to 20 are enriched in basic residues; that stretch reads MAVPKRRTSRSNTRSRRAQW. Positions 1–26 are disordered; the sequence is MAVPKRRTSRSNTRSRRAQWKAKAPA.

The protein belongs to the bacterial ribosomal protein bL32 family.

The chain is Large ribosomal subunit protein bL32 from Parafrankia sp. (strain EAN1pec).